A 66-amino-acid polypeptide reads, in one-letter code: Large ribosomal subunit protein bL31 (66 aa).

Positions 16, 18, 36, and 39 each coordinate Zn(2+).

This sequence belongs to the bacterial ribosomal protein bL31 family. Type A subfamily. In terms of assembly, part of the 50S ribosomal subunit. The cofactor is Zn(2+).

Functionally, binds the 23S rRNA. This is Large ribosomal subunit protein bL31 from Sulfurovum sp. (strain NBC37-1).